A 246-amino-acid polypeptide reads, in one-letter code: Transmembrane and ubiquitin-like domain-containing protein 1 (246 aa).

Positions 2-30 (TLIEGVGDEVTVLFSVLACLLVLALAWVS) are required to release iHOPS from membranes. Residues 11 to 31 (VTVLFSVLACLLVLALAWVST) traverse the membrane as a helical segment. Residues 34 to 101 (AEGGDPLPQP…TPPAPDSPQE (68 aa)) form a disordered region. Residues 40-50 (LPQPSGTPTPS) show a composition bias toward pro residues. The residue at position 71 (threonine 71) is a Phosphothreonine. Position 73 is a phosphoserine (serine 73). The residue at position 92 (threonine 92) is a Phosphothreonine. Residues serine 98 and serine 127 each carry the phosphoserine modification. One can recognise a Ubiquitin-like domain in the interval 103–176 (LVLRLKFLND…LHCHVSTRVG (74 aa)). 2 consecutive transmembrane segments (helical) span residues 195-215 (IGSL…YCQI) and 221-241 (FPLT…LLAF).

Interacts with EEF1A1, GRIA2, GRIP1, CAMLG, TUBG1. Interacts with NPM1 and CDKN2A; TMUB1 can enhance interaction between NPM1 and CDKN2A and is proposed to bridge the proteins; proposed to be mediated by iHOPS. Interacts with ERLIN2 and AMFR; TMUB1 promotes the interaction of ERLIN2 with AMFR. In terms of processing, processed by regulated intramembrane proteolysis (RIP)in the N-terminus to release iHOPS from membranes. Ubiquitously expressed with highest levels in mammary and thyroid glands, bone marrow and spleen; limited expression in cardiac, pancreatic and ovarian tissues.

It localises to the membrane. The protein localises to the postsynaptic cell membrane. Its subcellular location is the recycling endosome. The protein resides in the cytoplasm. It is found in the nucleus. It localises to the nucleolus. The protein localises to the cytoskeleton. Its subcellular location is the microtubule organizing center. The protein resides in the centrosome. Involved in sterol-regulated ubiquitination and degradation of HMG-CoA reductase HMGCR. Involved in positive regulation of AMPA-selective glutamate receptor GRIA2 recycling to the cell surface. Acts as a negative regulator of hepatocyte growth during regeneration. Functionally, may contribute to the regulation of translation during cell-cycle progression. May contribute to the regulation of cell proliferation. May be involved in centrosome assembly. Modulates stabilization and nucleolar localization of tumor suppressor CDKN2A and enhances association between CDKN2A and NPM1. This chain is Transmembrane and ubiquitin-like domain-containing protein 1 (TMUB1), found in Homo sapiens (Human).